Consider the following 35-residue polypeptide: Bacteriocin lactococcin-G subunit beta (35 aa).

In terms of assembly, bacteriocin activity requires interaction of alpha and beta peptides in a molar ratio of 7:1 or 8:1 respectively.

Kills Lactococci. The protein is Bacteriocin lactococcin-G subunit beta of Lactococcus lactis subsp. lactis (Streptococcus lactis).